Here is a 426-residue protein sequence, read N- to C-terminus: Serine--tRNA ligase (426 aa).

228-230 is an L-serine binding site; that stretch reads TSE. Residues 259–261 and Val-275 each bind ATP; that span reads RRE. Glu-282 provides a ligand contact to L-serine. 346-349 contributes to the ATP binding site; the sequence is ELTS. Thr-386 provides a ligand contact to L-serine.

The protein belongs to the class-II aminoacyl-tRNA synthetase family. Type-1 seryl-tRNA synthetase subfamily. In terms of assembly, homodimer. The tRNA molecule binds across the dimer.

The protein resides in the cytoplasm. The enzyme catalyses tRNA(Ser) + L-serine + ATP = L-seryl-tRNA(Ser) + AMP + diphosphate + H(+). The catalysed reaction is tRNA(Sec) + L-serine + ATP = L-seryl-tRNA(Sec) + AMP + diphosphate + H(+). The protein operates within aminoacyl-tRNA biosynthesis; selenocysteinyl-tRNA(Sec) biosynthesis; L-seryl-tRNA(Sec) from L-serine and tRNA(Sec): step 1/1. Its function is as follows. Catalyzes the attachment of serine to tRNA(Ser). Is also able to aminoacylate tRNA(Sec) with serine, to form the misacylated tRNA L-seryl-tRNA(Sec), which will be further converted into selenocysteinyl-tRNA(Sec). In Arthrobacter sp. (strain FB24), this protein is Serine--tRNA ligase.